The sequence spans 424 residues: MFDVVISDIEAREILDSRGYPTLCVKVITNTGTFGEACVPSGASTGIKEALELRDKDPKRYQGKGVLQAISNVEKVLVPALQGFSVFDQITADAIMIDADGTPNKEKLGANAILGVSLALAKAAANTLQRPLYRYLGGSFSHVLPCPMMNLINGGMHATNGLQFQEFMIRPISAPSLKEAVRMGAEVFNALKKILQNRQLATGVGDEGGFAPNLASNAEALDLLLTAIETAGFTPREDISLALDCAASSFYNTQDKTYDGKSYADQVGILAELCEHYPIDSIEDGLAEEDFEGWKLLSETLGDRVQLVGDDLFVTNSALIAEGIAQGLANAVLIKPNQIGTLTETAEAIRLATIQGYATILSHRSGETEDTTIADLAVAFNTGQIKTGSLSRSERIAKYNRLMAIEEEMGPEALFQDSNPFSKA.

Residue Q165 participates in (2R)-2-phosphoglycerate binding. E207 serves as the catalytic Proton donor. The Mg(2+) site is built by D244, E283, and D310. The (2R)-2-phosphoglycerate site is built by K335, R364, S365, and K386. Catalysis depends on K335, which acts as the Proton acceptor.

It belongs to the enolase family. Mg(2+) serves as cofactor.

Its subcellular location is the cytoplasm. The protein localises to the secreted. It localises to the cell surface. The enzyme catalyses (2R)-2-phosphoglycerate = phosphoenolpyruvate + H2O. Its pathway is carbohydrate degradation; glycolysis; pyruvate from D-glyceraldehyde 3-phosphate: step 4/5. Its function is as follows. Catalyzes the reversible conversion of 2-phosphoglycerate (2-PG) into phosphoenolpyruvate (PEP). It is essential for the degradation of carbohydrates via glycolysis. The polypeptide is Enolase (Chlamydia trachomatis serovar L2 (strain ATCC VR-902B / DSM 19102 / 434/Bu)).